The chain runs to 289 residues: MNMPLHQISAIPSQDATSARVYRSKTKEKEREEQNEKTLGHSMSHSSNISKAGGSSVASAPVSSFPRTSVTPSNQDICRICHCEGDDESPLITPCRCTGSLHFVHQTCLQQWIKSSDTRCCELCKYEFIMETKLKPLRKWEKLQMTSSERRKIMCSVTFHVIAITCVVWSLYVLIDRTAEEIRQGQATGILEWPFWTKLVVVAIGFTGGLLFMYVQCKVYVQLWRRLKAYNRVIYVQNCPETSKRNIFEKPALPEPNFESKDGRGVCHSDTNSSCCTEPEDTGAEIIHV.

The interval 1–68 (MNMPLHQISA…SAPVSSFPRT (68 aa)) is disordered. Basic and acidic residues predominate over residues 25–39 (KTKEKEREEQNEKTL). Low complexity predominate over residues 50-64 (SKAGGSSVASAPVSS). The RING-CH-type zinc-finger motif lies at 70 to 131 (VTPSNQDICR…ELCKYEFIME (62 aa)). Residues Cys78, Cys81, Cys95, Cys97, His105, Cys108, Cys121, and Cys124 each coordinate Zn(2+). Transmembrane regions (helical) follow at residues 155–175 (CSVT…YVLI) and 195–215 (FWTK…FMYV).

As to quaternary structure, interacts with CD86.

It is found in the golgi apparatus membrane. Its subcellular location is the endoplasmic reticulum membrane. It localises to the cytoplasmic vesicle membrane. The protein resides in the lysosome membrane. The protein localises to the early endosome membrane. The enzyme catalyses S-ubiquitinyl-[E2 ubiquitin-conjugating enzyme]-L-cysteine + [acceptor protein]-L-lysine = [E2 ubiquitin-conjugating enzyme]-L-cysteine + N(6)-ubiquitinyl-[acceptor protein]-L-lysine.. It functions in the pathway protein modification; protein ubiquitination. In terms of biological role, E3 ubiquitin-protein ligase that plays several important roles in innate immunity and adaptive immunity. Mediates ubiquitination of CD86 and MHC class II proteins, such as HLA-DR alpha and beta, and promotes their subsequent endocytosis and sorting to lysosomes via multivesicular bodies. Possesses a very broad antiviral activity by specifically inactivating different viral fusion proteins. Targets and ubiquitinates cytoplasmic lysine residues of viral envelope glycoproteins with single transmembrane domains leading to their lysosomal degradation. Mediates the regulation of constitutive ubiquitination and trafficking of the viral restriction factor BST2 within the endocytic pathway. Plays a role in maintenance of immune tolerance to self by promoting the turnover and proteasomal degradation of PD-L1/CD274 via ubiquitination. Catalyzes the 'Lys-63'-linked polyubiquitylation of cGAS thereby inhibiting its DNA binding ability and impairing its antiviral innate immunity. Negatively regulates IL7-mediated T-cell homeostasis by mediating 'Lys-27'-linked polyubiquitination of IL7R, leading to its lysosomal degradation. The sequence is that of E3 ubiquitin-protein ligase MARCHF8 (MARCHF8) from Bos taurus (Bovine).